A 396-amino-acid chain; its full sequence is N-terminal EF-hand calcium-binding protein 3 (396 aa).

The span at 14–34 (PPAPQPQPQTPRHPQLAPDPG) shows a compositional bias: pro residues. The tract at residues 14-36 (PPAPQPQPQTPRHPQLAPDPGPA) is disordered. Residues 36–71 (AGHTLFQDVFRRADKNDDGKLSFEEFQNYFADGVLS) form the EF-hand domain. Residues Asp49, Asn51, Asp53, Lys55, and Glu60 each contribute to the Ca(2+) site. The interval 181 to 190 (VEAQSRLCGS) is required for interaction with APBA3. The disordered stretch occupies residues 197-220 (ALRSVSRSSTWSPGSSDTGRSSEA). Over residues 206–217 (TWSPGSSDTGRS) the composition is skewed to polar residues. An ABM domain is found at 296-385 (LMAQRQVQVA…RAPDTLTTVF (90 aa)).

Interacts with the N-terminal domain of APBA2. Interacts with NEK2. Interacts with APBA3; APBA3 seems to mediate the interaction between NECAB3 and HIF1AN. Phosphorylated by NEK2. Strongly expressed in heart and skeletal muscle, moderately in brain and pancreas.

Its subcellular location is the golgi apparatus. In terms of biological role, inhibits the interaction of APBA2 with amyloid-beta precursor protein (APP), and hence allows formation of amyloid-beta. May enhance the activity of HIF1A and thus promote glycolysis under normoxic conditions; the function requires its ABM domain and may implicate the stabilization of the interaction between HIF1AN and APBA3. This Homo sapiens (Human) protein is N-terminal EF-hand calcium-binding protein 3 (NECAB3).